We begin with the raw amino-acid sequence, 335 residues long: 2-acylglycerol O-acyltransferase 1 (335 aa).

Helical transmembrane passes span 24 to 44 and 47 to 67; these read WVFS…SLVL and LWLI…TPQA. N-linked (GlcNAc...) asparagine glycosylation is found at N77, N125, and N180.

It belongs to the diacylglycerol acyltransferase family.

Its subcellular location is the endoplasmic reticulum membrane. The catalysed reaction is a 2-acylglycerol + an acyl-CoA = a 1,2-diacylglycerol + CoA. It catalyses the reaction a 2-acylglycerol + an acyl-CoA = a 1,2-diacyl-sn-glycerol + CoA. The enzyme catalyses a 2-acylglycerol + an acyl-CoA = a 2,3-diacyl-sn-glycerol + CoA. It carries out the reaction a 1-acylglycerol + an acyl-CoA = a 1,2-diacylglycerol + CoA. The catalysed reaction is a 1-acylglycerol + an acyl-CoA = a 1,3-diacylglycerol + CoA. It catalyses the reaction a 1-acyl-sn-glycerol + an acyl-CoA = a 1,3-diacyl-sn-glycerol + CoA. The enzyme catalyses a 3-acyl-sn-glycerol + an acyl-CoA = a 1,3-diacyl-sn-glycerol + CoA. It participates in glycerolipid metabolism; triacylglycerol biosynthesis. Involved in glycerolipid synthesis and lipid metabolism. Catalyzes the formation of diacylglycerol, the precursor of triacylglycerol, by transferring the acyl chain of a fatty acyl-CoA to a monoacylglycerol, mainly at the sn-1 or sn-3 positions. It uses both sn-2-monoacylglycerol (2-acylglycerol) and sn-1-monoacylglycerol (1-acyl-sn-glycerol) equally well as substrates, and uses sn-3-monoacylglycerol (3-acyl-sn-glycerol) with lower efficiency. The polypeptide is 2-acylglycerol O-acyltransferase 1 (mogat1) (Xenopus tropicalis (Western clawed frog)).